The chain runs to 144 residues: Large ribosomal subunit protein uL15 (144 aa).

Residues M1–Q54 are disordered. Gly residues predominate over residues R21–C31.

This sequence belongs to the universal ribosomal protein uL15 family. As to quaternary structure, part of the 50S ribosomal subunit.

Binds to the 23S rRNA. This chain is Large ribosomal subunit protein uL15, found in Dechloromonas aromatica (strain RCB).